A 332-amino-acid polypeptide reads, in one-letter code: ATP-dependent (S)-NAD(P)H-hydrate dehydratase (332 aa).

Positions 46-326 (LLERARNIVP…EQIHNVFDDI (281 aa)) constitute a YjeF C-terminal domain. (6S)-NADPHX contacts are provided by residues G146 and 199-205 (NAIEFCR). Residues 230-234 (KGLND) and 251-260 (GSGRRCGGQG) each bind ATP. D261 lines the (6S)-NADPHX pocket.

This sequence belongs to the NnrD/CARKD family. The cofactor is Mg(2+).

The catalysed reaction is (6S)-NADHX + ATP = ADP + phosphate + NADH + H(+). The enzyme catalyses (6S)-NADPHX + ATP = ADP + phosphate + NADPH + H(+). Functionally, catalyzes the dehydration of the S-form of NAD(P)HX at the expense of ATP, which is converted to ADP. Together with NAD(P)HX epimerase, which catalyzes the epimerization of the S- and R-forms, the enzyme allows the repair of both epimers of NAD(P)HX, a damaged form of NAD(P)H that is a result of enzymatic or heat-dependent hydration. This Aedes aegypti (Yellowfever mosquito) protein is ATP-dependent (S)-NAD(P)H-hydrate dehydratase.